The primary structure comprises 239 residues: Ras-like protein B (239 aa).

GTP-binding positions include 13–18 (GVGKTA), 29–35 (VETYDPT), 59–60 (AG), 139–142 (NKSD), and 169–171 (SAK). An Effector region motif is present at residues 32–40 (YDPTIEDSY). The interval 191–227 (RQQQQGGRAQDRRPTGLGPMRDRDAGPEYPKTFRPDR) is disordered. Basic and acidic residues predominate over residues 199-226 (AQDRRPTGLGPMRDRDAGPEYPKTFRPD).

This sequence belongs to the small GTPase superfamily. Ras family. In terms of assembly, interacts with mpkA.

It carries out the reaction GTP + H2O = GDP + phosphate + H(+). Its function is as follows. Ras-like protein involved in the activation of Ras protein signal transduction. Ras proteins bind GDP/GTP and possess intrinsic GTPase activity. Plays a role in hyphal morphology and conidiophore development. Required for full virulence. The chain is Ras-like protein B from Aspergillus fumigatus (strain ATCC MYA-4609 / CBS 101355 / FGSC A1100 / Af293) (Neosartorya fumigata).